A 763-amino-acid chain; its full sequence is Ethylene receptor 2 (763 aa).

The next 3 helical transmembrane spans lie at 58 to 78 (FLIA…ATCS), 86 to 106 (IVLQ…ITMF), and 115 to 135 (VVLA…ATAI). Positions 97 and 101 each coordinate Cu cation. The GAF domain occupies 190–339 (DRHTILYTTM…VVADQVAVAL (150 aa)). Positions 382–615 (AMYDGMRRPM…TIMLALQFQL (234 aa)) constitute a Histidine kinase domain. The 120-residue stretch at 641–760 (QVILVDSDDT…ALGDELYRVL (120 aa)) folds into the Response regulatory domain. D692 is subject to 4-aspartylphosphate.

It belongs to the ethylene receptor family. Cu cation is required as a cofactor. As to expression, expressed in anthers and hulls.

The protein localises to the endoplasmic reticulum membrane. It catalyses the reaction ATP + protein L-histidine = ADP + protein N-phospho-L-histidine.. Functionally, ethylene receptor related to bacterial two-component regulators. Acts as a negative regulator of ethylene signaling. May delay the transition from the vegetative stage to the floral stage by up-regulating GI (GIGANTEA) and RCN1 and cause starch accumulation in stems by down-regulating the alpha-amylase AMY3D. The protein is Ethylene receptor 2 of Oryza sativa subsp. indica (Rice).